The following is a 177-amino-acid chain: Large ribosomal subunit protein uL6 (177 aa).

Belongs to the universal ribosomal protein uL6 family. Part of the 50S ribosomal subunit.

Its function is as follows. This protein binds to the 23S rRNA, and is important in its secondary structure. It is located near the subunit interface in the base of the L7/L12 stalk, and near the tRNA binding site of the peptidyltransferase center. The chain is Large ribosomal subunit protein uL6 from Methylibium petroleiphilum (strain ATCC BAA-1232 / LMG 22953 / PM1).